The primary structure comprises 458 residues: Exodeoxyribonuclease 7 large subunit (458 aa).

The protein belongs to the XseA family. As to quaternary structure, heterooligomer composed of large and small subunits.

The protein localises to the cytoplasm. The enzyme catalyses Exonucleolytic cleavage in either 5'- to 3'- or 3'- to 5'-direction to yield nucleoside 5'-phosphates.. Bidirectionally degrades single-stranded DNA into large acid-insoluble oligonucleotides, which are then degraded further into small acid-soluble oligonucleotides. The sequence is that of Exodeoxyribonuclease 7 large subunit from Halalkalibacterium halodurans (strain ATCC BAA-125 / DSM 18197 / FERM 7344 / JCM 9153 / C-125) (Bacillus halodurans).